Consider the following 283-residue polypeptide: Pantothenate synthetase (283 aa).

34–41 serves as a coordination point for ATP; the sequence is MGALHDGH. Catalysis depends on H41, which acts as the Proton donor. Q65 contributes to the (R)-pantoate binding site. Q65 contributes to the beta-alanine binding site. 152 to 155 is a binding site for ATP; that stretch reads GSKD. (R)-pantoate is bound at residue Q158. ATP-binding positions include V181 and 189–192; that span reads MSSR.

It belongs to the pantothenate synthetase family. Homodimer.

It localises to the cytoplasm. It catalyses the reaction (R)-pantoate + beta-alanine + ATP = (R)-pantothenate + AMP + diphosphate + H(+). Its pathway is cofactor biosynthesis; (R)-pantothenate biosynthesis; (R)-pantothenate from (R)-pantoate and beta-alanine: step 1/1. Its function is as follows. Catalyzes the condensation of pantoate with beta-alanine in an ATP-dependent reaction via a pantoyl-adenylate intermediate. The chain is Pantothenate synthetase from Rhodopseudomonas palustris (strain ATCC BAA-98 / CGA009).